Here is a 462-residue protein sequence, read N- to C-terminus: Lipase A (462 aa).

The signal sequence occupies residues 1–21; the sequence is MRVSLRSITSLLAAATAAVLA. C122 and C294 are disulfide-bonded. Residues S205, D355, and H387 each act as charge relay system in the active site. A disulfide bond links C371 and C415.

It belongs to the AB hydrolase superfamily. Lipase family. As to quaternary structure, monomer.

The protein localises to the secreted. The enzyme catalyses a triacylglycerol + H2O = a diacylglycerol + a fatty acid + H(+). Its function is as follows. Hydrolyzes triglycerides, with a preference for substrates with short-chain lengths (C4 to C8). Has the highest activity with tributyrin (C4), followed by tricaproin (C6) and tricaprylin (C8). Can also hydrolyze vinylacetate (C2) and triolein (C18), but with lower efficiency. Has no activity with tripalmitin (C16). The chain is Lipase A from Moesziomyces aphidis (Pseudozyma aphidis).